A 185-amino-acid chain; its full sequence is Large ribosomal subunit protein uL5 (185 aa).

It belongs to the universal ribosomal protein uL5 family. In terms of assembly, part of the 50S ribosomal subunit; part of the 5S rRNA/L5/L18/L25 subcomplex. Contacts the 5S rRNA and the P site tRNA. Forms a bridge to the 30S subunit in the 70S ribosome.

This is one of the proteins that bind and probably mediate the attachment of the 5S RNA into the large ribosomal subunit, where it forms part of the central protuberance. In the 70S ribosome it contacts protein S13 of the 30S subunit (bridge B1b), connecting the 2 subunits; this bridge is implicated in subunit movement. Contacts the P site tRNA; the 5S rRNA and some of its associated proteins might help stabilize positioning of ribosome-bound tRNAs. This is Large ribosomal subunit protein uL5 from Rhizobium rhizogenes (strain K84 / ATCC BAA-868) (Agrobacterium radiobacter).